The following is a 657-amino-acid chain: PAN2-PAN3 deadenylation complex subunit PAN3 (657 aa).

Disordered stretches follow at residues methionine 1 to aspartate 29, histidine 52 to isoleucine 98, and serine 115 to isoleucine 135. The C3H1-type zinc-finger motif lies at alanine 27–serine 55. Residues histidine 52–serine 67 are compositionally biased toward basic and acidic residues. 2 stretches are compositionally biased toward polar residues: residues aspartate 75–isoleucine 98 and serine 115–glutamate 132. The segment at glutamine 259–serine 521 is pseudokinase domain. Residues arginine 311, aspartate 360 to threonine 367, and serine 421 to lysine 422 contribute to the ATP site. Residues serine 522–phenylalanine 560 are a coiled coil. The knob domain stretch occupies residues isoleucine 561–isoleucine 657.

Belongs to the protein kinase superfamily. PAN3 family. Homodimer. Forms a heterotrimer with a catalytic subunit PAN2 to form the poly(A)-nuclease (PAN) deadenylation complex. Interacts (via PAM-2 motif) with poly(A)-binding protein PAB1 (via PABC domain), conferring substrate specificity of the enzyme complex.

Its subcellular location is the cytoplasm. Functionally, regulatory subunit of the poly(A)-nuclease (PAN) deadenylation complex, one of two cytoplasmic mRNA deadenylases involved in mRNA turnover. PAN specifically shortens poly(A) tails of RNA and the activity is stimulated by poly(A)-binding protein PAB1. PAN deadenylation is followed by rapid degradation of the shortened mRNA tails by the CCR4-NOT complex. Deadenylated mRNAs are then degraded by two alternative mechanisms, namely exosome-mediated 3'-5' exonucleolytic degradation, or deadenylation-dependent mRNA decaping and subsequent 5'-3' exonucleolytic degradation by XRN1. May also be involved in post-transcriptional maturation of mRNA poly(A) tails. PAN3 acts as a positive regulator for PAN activity, recruiting the catalytic subunit PAN2 to mRNA via its interaction with RNA and with PAB1. The polypeptide is PAN2-PAN3 deadenylation complex subunit PAN3 (Coccidioides immitis (strain RS) (Valley fever fungus)).